The primary structure comprises 449 residues: Phosphoglucosamine mutase (449 aa).

Residue Ser100 is the Phosphoserine intermediate of the active site. Mg(2+)-binding residues include Ser100, Asp240, Asp242, and Asp244. A Phosphoserine modification is found at Ser100.

It belongs to the phosphohexose mutase family. Mg(2+) serves as cofactor. Activated by phosphorylation.

The enzyme catalyses alpha-D-glucosamine 1-phosphate = D-glucosamine 6-phosphate. In terms of biological role, catalyzes the conversion of glucosamine-6-phosphate to glucosamine-1-phosphate. The protein is Phosphoglucosamine mutase of Clostridium novyi (strain NT).